We begin with the raw amino-acid sequence, 3046 residues long: Nucleosome-remodeling factor subunit BPTF (3046 aa).

Residues 1–232 (MRGRRGRPPK…DIPPLEFPKS (232 aa)) are disordered. The span at 22-33 (PAPPPPPPPPTS) shows a compositional bias: pro residues. The span at 62–72 (TRLSSPRGGSS) shows a compositional bias: low complexity. Pro residues predominate over residues 78–87 (PPPPPAPPST). Over residues 91–110 (GRGGRGGGGGRTGGGGGGGH) the composition is skewed to gly residues. Over residues 129–186 (HESEEEEEEEDMVSEEEEEEDGDAEETQDSEDDEEDEMEEDDDDSDYPEEMEDDDDDA) the composition is skewed to acidic residues. A compositionally biased stretch (low complexity) spans 190–203 (TESSFRSHSTYSST). Positions 205-215 (GRRKPRVHRPR) are enriched in basic residues. At Ser-216 the chain carries Phosphoserine. One can recognise a DDT domain in the interval 240–300 (NEHIMNVIAI…LKAVLREEDT (61 aa)). The segment at 390-437 (DDHCRVCHKLGDLLCCETCSAVYHLECVKPPLEEVPEDEWQCEVCVAH) adopts a PHD-type 1 zinc-finger fold. Composition is skewed to basic and acidic residues over residues 567 to 609 (IDNV…SDDK) and 616 to 628 (EQGK…EVGD). Residues 567-774 (IDNVKSPEET…GAGKGASGST (208 aa)) form a disordered region. A Phosphoserine modification is found at Ser-572. Residues 574-604 (EETEKDKNETENDSKDAEKNREEFEDQSLEK) adopt a coiled-coil conformation. Composition is skewed to polar residues over residues 631 to 653 (NSVS…SPSE) and 690 to 705 (TCES…SIQP). Positions 640 to 749 (NTTNATSEET…PVSIQEEIVG (110 aa)) are interaction with KEAP1. Low complexity predominate over residues 706–723 (NLENSNSSSELNSSQSES). Residues 725–738 (KAADDPENGERESH) show a composition bias toward basic and acidic residues. Residues Ser-763 and Ser-817 each carry the phosphoserine modification. Residues 839-921 (YFKLGQEGKY…QLENNIPSSF (83 aa)) are interaction with MAZ. Lys-880 carries the N6-acetyllysine modification. The stretch at 978-1007 (MTSIEREEKEKVKKKEKKQEEEETMQQATW) forms a coiled coil. A disordered region spans residues 1057-1157 (YRKSLEGTKN…MKTESHVNCQ (101 aa)). A Phosphothreonine modification is found at Thr-1064. Composition is skewed to basic and acidic residues over residues 1087-1102 (IKIE…KGSD) and 1113-1152 (DISK…KTES). Glycyl lysine isopeptide (Lys-Gly) (interchain with G-Cter in SUMO2) cross-links involve residues Lys-1088, Lys-1138, and Lys-1209. Disordered stretches follow at residues 1215-1339 (KGIG…GNDF), 1371-1448 (IVSS…FRTR), 1465-1537 (GEST…NGKD), and 1605-1706 (NSSE…GESK). Composition is skewed to polar residues over residues 1220–1232 (TSTN…SESP), 1242–1257 (QSDS…ANND), and 1266–1285 (CSES…TTNK). Residue Ser-1231 is modified to Phosphoserine. The segment covering 1287 to 1305 (YPKDRVLDDVSIRSPETKC) has biased composition (basic and acidic residues). The residue at position 1300 (Ser-1300) is a Phosphoserine. At Thr-1303 the chain carries Phosphothreonine. Ser-1310 is subject to Phosphoserine. Over residues 1372–1386 (VSSSKSALHSSVPKS) the composition is skewed to low complexity. Polar residues-rich tracts occupy residues 1409–1426 (SESN…SIQD) and 1434–1444 (VQNSNESISEQ). A compositionally biased stretch (basic and acidic residues) spans 1491-1525 (KKLEERPVNKCSDQIKLKNTTDKKNNENRESEKKG). The span at 1629–1656 (TLPSTKESDSTQTTTPSASCPESNSVNQ) shows a compositional bias: polar residues. Lys-1730 is covalently cross-linked (Glycyl lysine isopeptide (Lys-Gly) (interchain with G-Cter in SUMO2)). Disordered regions lie at residues 1973–2003 (VPET…TPKQ) and 2041–2070 (QAKK…STIS). Residues 2022 to 2050 (EIRAFAERVEKEKAQAVEQQAKKRLEQQK) adopt a coiled-coil conformation. Low complexity predominate over residues 2054–2070 (IATSTTSPTSSTTSTIS). Ser-2098 carries the phosphoserine modification. The residue at position 2155 (Arg-2155) is an Omega-N-methylarginine. The disordered stretch occupies residues 2160 to 2180 (TIRPNTSGSGGTTSNSQVITG). An asymmetric dimethylarginine mark is found at Arg-2162, Arg-2184, and Arg-2191. Residues 2232 to 2256 (VSAPNTVSSTPGQKSLTSATSTSNI) show a composition bias toward polar residues. Disordered regions lie at residues 2232 to 2270 (VSAP…QQGQ), 2346 to 2549 (TAST…RPQL), 2714 to 2733 (QAAK…SKQN), and 2795 to 2858 (PCPP…ISTT). Composition is skewed to low complexity over residues 2257–2270 (QSSA…QQGQ) and 2346–2362 (TAST…AGTG). The span at 2363 to 2375 (EQRQSKLSPQMQV) shows a compositional bias: polar residues. The span at 2391–2431 (PAEAQPQTAQPSAQPQPQTQPQSPAQPEVQTQPEVQTQTTV) shows a compositional bias: low complexity. The segment covering 2432–2485 (SSHVPSEAQPTHAQSSKPQVAAQSQPQSNVQGQSPVRVQSPSQTRIRPSTPSQL) has biased composition (polar residues). Phosphoserine is present on Ser-2465. The segment covering 2486–2538 (SPGQQSQVQTTTSQPIPIQPHTSLQIPSQGQPQSQPQVQSSTQTLSSGQTLNQ) has biased composition (low complexity). Residues 2706–2732 (DKIDKEEKQAAKKRKREESVEQKRSKQ) are a coiled coil. The span at 2714-2729 (QAAKKRKREESVEQKR) shows a compositional bias: basic and acidic residues. Residues 2795–2818 (PCPPVTPAPPAPPAPPPSPPPPPA) show a composition bias toward pro residues. A compositionally biased stretch (basic and acidic residues) spans 2838 to 2847 (KREEEKDSSS). The PHD-type 2 zinc finger occupies 2867 to 2918 (KLYCICKTPYDESKFYIGCDRCQNWYHGRCVGILQSEAELIDEYVCPQCQST). A Bromo domain is found at 2927 to 3031 (PLTEKDYEGL…SFFVQKLKGF (105 aa)).

It belongs to the PBTF family. As to quaternary structure, interacts with MAZ. Interacts with KEAP1. Component of the NURF-1 ISWI chromatin remodeling complex (also called the nucleosome-remodeling factor (NURF) complex) at least composed of SMARCA1 (isoform 2), BPTF, RBBP4 and RBBP7. Within the complex interacts with isoform 2 of SMARCA1. Component of the BPFT-SMARCA1 complex at least composed of SMARCA1 (isoform 1), BPFT, RBBP4 and RBBP7; the complex is catalytically inactive and does not remodel chromatin. Within the complex interacts with isoform 1 of SMARCA1. Component of the NURF-5 ISWI chromatin remodeling complex at least composed of SMARCA5/SNF2H and BPTF. Within NURF-5 ISWI chromatin remodeling complex interacts with SMARCA5/SNF2H. In terms of processing, phosphorylation enhances DNA-binding. Highly susceptible to proteolysis. As to expression, ubiquitously expressed, with highest levels in testis. Present in kidney, liver and brain. In the brain, highest levels are found in motor cortex (at protein level).

It localises to the cytoplasm. Its subcellular location is the nucleus. Its function is as follows. Regulatory subunit of the ATP-dependent NURF-1 and NURF-5 ISWI chromatin remodeling complexes, which form ordered nucleosome arrays on chromatin and facilitate access to DNA during DNA-templated processes such as DNA replication, transcription, and repair. The NURF-1 ISWI chromatin remodeling complex has a lower ATP hydrolysis rate than the NURF-5 ISWI chromatin remodeling complex. Within the NURF-1 ISWI chromatin-remodeling complex, binds to the promoters of En1 and En2 to positively regulate their expression and promote brain development. Histone-binding protein which binds to H3 tails trimethylated on 'Lys-4' (H3K4me3), which mark transcription start sites of active genes. Binds to histone H3 tails dimethylated on 'Lys-4' (H3K4Me2) to a lesser extent. May also regulate transcription through direct binding to DNA or transcription factors. The sequence is that of Nucleosome-remodeling factor subunit BPTF (BPTF) from Homo sapiens (Human).